A 164-amino-acid chain; its full sequence is uncharacterized protein (164 aa).

A compositionally biased stretch (polar residues) spans 1–17 (MNSRVPATQSWFSSHLP). The tract at residues 1–48 (MNSRVPATQSWFSSHLPTTEPDLEPATAAEGSTTETATLSPETTSFND) is disordered. Over residues 24–45 (EPATAAEGSTTETATLSPETTS) the composition is skewed to low complexity. The chain crosses the membrane as a helical span at residues 64-84 (MLLSFGIITVIGLAVAMVLYI). The stretch at 106-130 (TEEQDELEQELLEHGRDAASMQAAA) forms a coiled coil.

It is found in the membrane. This is an uncharacterized protein from Mus musculus (Mouse).